The sequence spans 533 residues: Probable nucleolar protein 5-1 (533 aa).

The region spanning 280-398 (IAPNLTALVG…LEARLRTLEG (119 aa)) is the Nop domain. The disordered stretch occupies residues 402 to 533 (GRLSGSAKGK…EKKKKKKTEV (132 aa)). Residues 412-423 (PKIEVYDKDKKK) are compositionally biased toward basic and acidic residues. Over residues 433-450 (KTYNTAADSLLQTPTVDS) the composition is skewed to polar residues. 2 stretches are compositionally biased toward basic and acidic residues: residues 474–489 (TEEP…KTEA) and 515–524 (MPAKKKEKSE).

Belongs to the NOP5/NOP56 family.

It localises to the nucleus. It is found in the nucleolus. Functionally, required for 60S ribosomal subunit biogenesis. In Arabidopsis thaliana (Mouse-ear cress), this protein is Probable nucleolar protein 5-1 (NOP5-1).